Reading from the N-terminus, the 354-residue chain is Anthranilate phosphoribosyltransferase (354 aa).

Belongs to the anthranilate phosphoribosyltransferase family.

The catalysed reaction is N-(5-phospho-beta-D-ribosyl)anthranilate + diphosphate = 5-phospho-alpha-D-ribose 1-diphosphate + anthranilate. It participates in amino-acid biosynthesis; L-tryptophan biosynthesis; L-tryptophan from chorismate: step 2/5. This Schizosaccharomyces pombe (strain 972 / ATCC 24843) (Fission yeast) protein is Anthranilate phosphoribosyltransferase (trp4).